We begin with the raw amino-acid sequence, 226 residues long: MNENLFAPFMIPVMLGIPITTLIIILPSMLFPAPNRLINNRTIAIQQWLTKLTSKQLMNVHSPKGQTWSLMLISLFLFIASTNLLGMLPHSFTPTTQLSMNVGMAIPLWAGTVTTGFRNKTKMSLAHLLPQGTPTFLIPMLVIIETISLFIQPVAWAVRLTANITAGHLLMHLIGETTLALMNINLFSAFITFTILALLTILEFAVALIQAYVFTLLVSLYLHDNT.

The next 5 membrane-spanning stretches (helical) occupy residues 5 to 25 (LFAP…LIII), 68 to 88 (WSLM…LGML), 97 to 117 (QLSM…TTGF), 136 to 156 (FLIP…PVAW), and 189 to 209 (AFIT…VALI).

It belongs to the ATPase A chain family. Component of the ATP synthase complex composed at least of ATP5F1A/subunit alpha, ATP5F1B/subunit beta, ATP5MC1/subunit c (homooctomer), MT-ATP6/subunit a, MT-ATP8/subunit 8, ATP5ME/subunit e, ATP5MF/subunit f, ATP5MG/subunit g, ATP5MK/subunit k, ATP5MJ/subunit j, ATP5F1C/subunit gamma, ATP5F1D/subunit delta, ATP5F1E/subunit epsilon, ATP5PF/subunit F6, ATP5PB/subunit b, ATP5PD/subunit d, ATP5PO/subunit OSCP. ATP synthase complex consists of a soluble F(1) head domain (subunits alpha(3) and beta(3)) - the catalytic core - and a membrane F(0) domain - the membrane proton channel (subunits c, a, 8, e, f, g, k and j). These two domains are linked by a central stalk (subunits gamma, delta, and epsilon) rotating inside the F1 region and a stationary peripheral stalk (subunits F6, b, d, and OSCP). Interacts with DNAJC30; interaction is direct.

It localises to the mitochondrion inner membrane. The enzyme catalyses H(+)(in) = H(+)(out). Its function is as follows. Subunit a, of the mitochondrial membrane ATP synthase complex (F(1)F(0) ATP synthase or Complex V) that produces ATP from ADP in the presence of a proton gradient across the membrane which is generated by electron transport complexes of the respiratory chain. ATP synthase complex consist of a soluble F(1) head domain - the catalytic core - and a membrane F(1) domain - the membrane proton channel. These two domains are linked by a central stalk rotating inside the F(1) region and a stationary peripheral stalk. During catalysis, ATP synthesis in the catalytic domain of F(1) is coupled via a rotary mechanism of the central stalk subunits to proton translocation. With the subunit c (ATP5MC1), forms the proton-conducting channel in the F(0) domain, that contains two crucial half-channels (inlet and outlet) that facilitate proton movement from the mitochondrial intermembrane space (IMS) into the matrix. Protons are taken up via the inlet half-channel and released through the outlet half-channel, following a Grotthuss mechanism. The chain is ATP synthase F(0) complex subunit a from Balaenoptera physalus (Fin whale).